The following is a 1774-amino-acid chain: Receptor-mediated endocytosis protein 6 homolog (1774 aa).

The Ras-GAP domain occupies 157-396; sequence ELLLKLLREL…EDVVAILPQQ (240 aa). 8 disordered regions span residues 444–480, 517–564, 661–727, 784–811, 869–947, 983–1102, 1115–1142, and 1214–1342; these read IPKQ…NNRS, PLAN…PAPT, AAHS…HHHG, ENTL…RNFS, AEID…EDSA, ESSF…EEQP, QEEQ…SMEQ, and RAGA…GGRS. Low complexity-rich tracts occupy residues 519–533 and 540–557; these read ANGQ…SASN and SSHS…AAPA. The span at 674-683 shows a compositional bias: basic and acidic residues; it reads QQERDVHENE. Polar residues predominate over residues 688–713; it reads DMVSANVSGRGTPNISGRDTPSSQVT. A compositionally biased stretch (basic and acidic residues) spans 794–809; the sequence is RGGDRGDRGDRDRDRN. Positions 887-905 are enriched in gly residues; that stretch reads PGSGGGAGVPEAGGGGGVV. A compositionally biased stretch (basic and acidic residues) spans 929–944; that stretch reads DPDRERLRNGSERSQE. The segment covering 1011–1027 has biased composition (polar residues); sequence MRRQTSAESSISNQSLN. Positions 1038–1047 are enriched in basic residues; the sequence is LAKHHHHHQH. Over residues 1048-1060 the composition is skewed to basic and acidic residues; that stretch reads RDRDRDRDRDRDH. Basic residues predominate over residues 1061-1076; sequence REHHHKSAALKKKKHQ. The span at 1077 to 1087 shows a compositional bias: basic and acidic residues; that stretch reads EHKEHQHRDLI. Residues 1091 to 1101 are compositionally biased toward acidic residues; sequence DCSEDKDEEEQ. The span at 1115-1125 shows a compositional bias: low complexity; the sequence is QEEQQQQQQQQ. The segment covering 1246–1291 has biased composition (basic and acidic residues); that stretch reads SADKEQQPYRDRERERDRERDRERDRDRERDRDRDRDRDRDREHHS. Positions 1310-1335 are enriched in low complexity; sequence SSSSKNNAIAIAAPSSINPNPSPSSA. Positions 1516-1546 form a coiled coil; it reads RHRQQLLLRSEQLEQLEVRLRSEARSCQRCL. The VPS9 domain maps to 1635 to 1774; sequence VSRDTVLSAH…KFIKTMDYLD (140 aa).

Belongs to the GAPVD1 family.

The protein localises to the membrane. Its function is as follows. Acts both as a GTPase-activating protein (GAP) and a guanine nucleotide exchange factor (GEF), and participates in endocytosis. This chain is Receptor-mediated endocytosis protein 6 homolog, found in Drosophila pseudoobscura pseudoobscura (Fruit fly).